Consider the following 156-residue polypeptide: MAFRMKLVVCIVLLSTLAVMSSADVYKGGGGGRYGGGRYGGGGGYGGGLGGGGLGGGGLGGGKGLGGGGLGGGGLGGGGLGGGGLGGGKGLGGGGLGGGGLGGGGLGGGGLGGGKGLGGGGLGGGGLGGGRGGGYGGGGGYGGGYGGGYGGGKYKG.

Positions 1 to 23 (MAFRMKLVVCIVLLSTLAVMSSA) are cleaved as a signal peptide. Lysine amide is present on Lys-155.

As to expression, expressed in hemocytes and secreted into the plasma following bacterial immune challenge.

Its subcellular location is the secreted. In terms of biological role, antimicrobial protein. Strong activity against the Gram-negative bacterium E.coli SBS363 and yeast C.albicans. No detectable activity against the Gram-positive bacterium M.luteus. In Acanthoscurria gomesiana (Tarantula spider), this protein is Acanthoscurrin-1.